Consider the following 187-residue polypeptide: MSFAMLRPAAGRYLYPEISMLSEDEENGSESSGSDEKPFHLDADGFGIKAGKRRSGKKAGRLHREPRQRHTANARERDRTNSVNTAFTALRTLIPTEPADRKLSKIETLRLASSYISHLGNVLLVGEACGDGQPCHTSPAFFHHGGGGGSPPPRDSENSQPKQICTFCLSNQRKLSKDRDRKTAIRS.

2 disordered regions span residues 21–83 (LSED…TNSV) and 140–163 (AFFH…QPKQ). The span at 34-43 (SDEKPFHLDA) shows a compositional bias: basic and acidic residues. Over residues 50–72 (AGKRRSGKKAGRLHREPRQRHTA) the composition is skewed to basic residues. The region spanning 67–119 (RQRHTANARERDRTNSVNTAFTALRTLIPTEPADRKLSKIETLRLASSYISHL) is the bHLH domain.

As to quaternary structure, efficient DNA binding requires dimerization with another bHLH protein. Dimerizes and binds the E-box consensus sequence with E12. In terms of tissue distribution, expressed in the intersomitic, the superficial proximomedial limb mesenchyme and the subectodermal mesenchyme.

It is found in the nucleus. Plays an early essential role in mesoderm formation, as well as a later role in formation of somite-derived chondrogenic lineages. The protein is Basic helix-loop-helix transcription factor scleraxis (SCX) of Gallus gallus (Chicken).